The chain runs to 399 residues: Delta(12) acyl-lipid conjugase (11E,13E-forming) (399 aa).

Residues 11–30 (RNGGGPKKKMGPGQGLGPGE) form a disordered region. 2 helical membrane-spanning segments follow: residues 61–81 (FSYL…ADTY) and 93–113 (LAWP…WGIA). The short motif at 114-118 (HDCGH) is the Histidine box-1 element. The chain crosses the membrane as a helical span at residues 126–146 (LVDDVVGFLIHSLVFVPYFSF). Positions 150 to 154 (HRRHH) match the Histidine box-2 motif. Transmembrane regions (helical) follow at residues 188–208 (VFII…FNIS), 232–252 (VLVH…YRIA), and 258–278 (GWLI…VVLI). The short motif at 325 to 329 (HVVHH) is the Histidine box-3 element.

Belongs to the fatty acid desaturase type 1 family. As to expression, expressed in developing seeds, but not in leaves.

Its subcellular location is the membrane. It carries out the reaction a (9Z,12Z)-octadecadienoyl-containing glycerolipid + 2 Fe(II)-[cytochrome b5] + O2 + 2 H(+) = a (9Z,11E,13E)-octadecatrienoyl-containing glycerolipid + 2 Fe(III)-[cytochrome b5] + 2 H2O. It catalyses the reaction (9Z,12Z,15Z)-octadecatrienoyl-containing glycerolipid + 2 Fe(II)-[cytochrome b5] + O2 + 2 H(+) = a (9Z,11E,13E,15Z)-octadecatetraenoyl-containing glycerolipid + 2 Fe(III)-[cytochrome b5] + 2 H2O. The protein operates within lipid metabolism; polyunsaturated fatty acid biosynthesis. Converts linoleic acid to alpha-eleostearic acid (18:3(9Z,11E,13E)) and alpha-linolenic acid to alpha-parinaric acid (18:4(9Z,11E, 13E, 15Z)). Converts a single cis double bond at carbon 12 to two conjugated trans bonds at positions 11 and 13. In Momordica charantia (Bitter gourd), this protein is Delta(12) acyl-lipid conjugase (11E,13E-forming).